We begin with the raw amino-acid sequence, 350 residues long: Cobalt-precorrin-5B C(1)-methyltransferase (350 aa).

Belongs to the CbiD family.

It carries out the reaction Co-precorrin-5B + S-adenosyl-L-methionine = Co-precorrin-6A + S-adenosyl-L-homocysteine. Its pathway is cofactor biosynthesis; adenosylcobalamin biosynthesis; cob(II)yrinate a,c-diamide from sirohydrochlorin (anaerobic route): step 6/10. Functionally, catalyzes the methylation of C-1 in cobalt-precorrin-5B to form cobalt-precorrin-6A. This is Cobalt-precorrin-5B C(1)-methyltransferase from Sulfurisphaera tokodaii (strain DSM 16993 / JCM 10545 / NBRC 100140 / 7) (Sulfolobus tokodaii).